The chain runs to 491 residues: MKLNELMQAIPVFTGEASETIEISHIAQDSRKVKPGTLFICIDGELVDGHQFASRAVELGAVAIIAEKQLDVSIPVIYVRDSKRAMAMLADYFYGSPTQALKLVGITGTNGKTTVSHLVEQIVRENGEQTGLIGTMYRKIGDQILETKNTTPDSLTLQETFRDMLLSGVSTAVMEVSSHALVQGRVYGSDYDVAVFMNLSQDHLDYHHTMEEYANAKSLLFAQLGNSYHTSNPKIAVLNADDEESVRMQKATAAHVITFGIKQQADFKANNIRITSHGSTFDLRTPIGNFTLKIKMIGNFSVYNVLAAIATSFALHIPMEKAIKTVESIPGVKGRFELVHAGQEFPVIVDYAHTPDGLLNVLETIAEFAEKRVFVVVGCGGDRDKGKRPQMAKIAVDYATNPIFTSDNPRSENPRAIIEDMIQGVPYSDSYVVHENRRDAIRFAVNEAEAGDVILIAGKGHEDYQVIGDEVIDFDDRVEARIAIEKKLGLA.

Serine 30 lines the UDP-N-acetyl-alpha-D-muramoyl-L-alanyl-D-glutamate pocket. ATP is bound at residue 108–114 (GTNGKTT). Residues asparagine 149, 150–151 (TT), serine 177, glutamine 183, and arginine 185 each bind UDP-N-acetyl-alpha-D-muramoyl-L-alanyl-D-glutamate. Lysine 217 carries the post-translational modification N6-carboxylysine. Residues arginine 383, 407–410 (DNPR), glycine 458, and glutamate 462 contribute to the meso-2,6-diaminopimelate site. Positions 407-410 (DNPR) match the Meso-diaminopimelate recognition motif motif.

The protein belongs to the MurCDEF family. MurE subfamily. Requires Mg(2+) as cofactor. Carboxylation is probably crucial for Mg(2+) binding and, consequently, for the gamma-phosphate positioning of ATP.

It localises to the cytoplasm. The enzyme catalyses UDP-N-acetyl-alpha-D-muramoyl-L-alanyl-D-glutamate + meso-2,6-diaminopimelate + ATP = UDP-N-acetyl-alpha-D-muramoyl-L-alanyl-gamma-D-glutamyl-meso-2,6-diaminopimelate + ADP + phosphate + H(+). It functions in the pathway cell wall biogenesis; peptidoglycan biosynthesis. In terms of biological role, catalyzes the addition of meso-diaminopimelic acid to the nucleotide precursor UDP-N-acetylmuramoyl-L-alanyl-D-glutamate (UMAG) in the biosynthesis of bacterial cell-wall peptidoglycan. In Listeria monocytogenes serotype 4b (strain F2365), this protein is UDP-N-acetylmuramoyl-L-alanyl-D-glutamate--2,6-diaminopimelate ligase.